The chain runs to 293 residues: MKKILAFLLIAAGSTLFFVFLFIFLSKVFSGEILLSRYIFRIGGFELRWYSTLILMGFLISYFVARKRAKNEGINLEEFDELIFYGVIAGIVGARLYYVLFNLKYYRSLWDALKIWEGGLAIHGAVIGALLTGFLYVRLKKPSFTFLQATDLFTSVLPLGQAIGRWGNFFNYEAFGVPTNLPWKMFVPEPYRPVVYKDYSFFHPTFLYESIWDLLVFFMLSVYFKRYRKRHGEVTCLYFVLYSLGRIVIERLRVDSLMIGNIKAAQLLSAVLILLGFTGFLILRSSQEPKRAF.

A run of 4 helical transmembrane segments spans residues 45–65 (FELR…YFVA), 81–101 (ELIF…YVLF), 115–135 (IWEG…TGFL), and 144–164 (FTFL…QAIG). Arg-165 is a binding site for a 1,2-diacyl-sn-glycero-3-phospho-(1'-sn-glycerol). Helical transmembrane passes span 204–224 (PTFL…SVYF), 231–249 (HGEV…RIVI), and 262–282 (IKAA…GFLI).

Belongs to the Lgt family.

The protein resides in the cell inner membrane. It catalyses the reaction L-cysteinyl-[prolipoprotein] + a 1,2-diacyl-sn-glycero-3-phospho-(1'-sn-glycerol) = an S-1,2-diacyl-sn-glyceryl-L-cysteinyl-[prolipoprotein] + sn-glycerol 1-phosphate + H(+). It functions in the pathway protein modification; lipoprotein biosynthesis (diacylglyceryl transfer). Catalyzes the transfer of the diacylglyceryl group from phosphatidylglycerol to the sulfhydryl group of the N-terminal cysteine of a prolipoprotein, the first step in the formation of mature lipoproteins. The protein is Phosphatidylglycerol--prolipoprotein diacylglyceryl transferase of Thermotoga maritima (strain ATCC 43589 / DSM 3109 / JCM 10099 / NBRC 100826 / MSB8).